The following is a 155-amino-acid chain: 6,7-dimethyl-8-ribityllumazine synthase (155 aa).

5-amino-6-(D-ribitylamino)uracil contacts are provided by residues Trp22, 56–58 (SYE), and 80–82 (AVI). Residue 85–86 (DT) coordinates (2S)-2-hydroxy-3-oxobutyl phosphate. Catalysis depends on His88, which acts as the Proton donor. Phe113 is a binding site for 5-amino-6-(D-ribitylamino)uracil. Residue Arg127 participates in (2S)-2-hydroxy-3-oxobutyl phosphate binding.

Belongs to the DMRL synthase family.

The catalysed reaction is (2S)-2-hydroxy-3-oxobutyl phosphate + 5-amino-6-(D-ribitylamino)uracil = 6,7-dimethyl-8-(1-D-ribityl)lumazine + phosphate + 2 H2O + H(+). The protein operates within cofactor biosynthesis; riboflavin biosynthesis; riboflavin from 2-hydroxy-3-oxobutyl phosphate and 5-amino-6-(D-ribitylamino)uracil: step 1/2. Functionally, catalyzes the formation of 6,7-dimethyl-8-ribityllumazine by condensation of 5-amino-6-(D-ribitylamino)uracil with 3,4-dihydroxy-2-butanone 4-phosphate. This is the penultimate step in the biosynthesis of riboflavin. The polypeptide is 6,7-dimethyl-8-ribityllumazine synthase (Deinococcus radiodurans (strain ATCC 13939 / DSM 20539 / JCM 16871 / CCUG 27074 / LMG 4051 / NBRC 15346 / NCIMB 9279 / VKM B-1422 / R1)).